Here is a 57-residue protein sequence, read N- to C-terminus: UPF0391 membrane protein Nwi_2359 (57 aa).

2 helical membrane passes run 4-24 (WVVT…GGIA) and 30-50 (IAKI…VVGF).

The protein belongs to the UPF0391 family.

The protein resides in the cell membrane. This Nitrobacter winogradskyi (strain ATCC 25391 / DSM 10237 / CIP 104748 / NCIMB 11846 / Nb-255) protein is UPF0391 membrane protein Nwi_2359.